Here is a 331-residue protein sequence, read N- to C-terminus: Probable allantoicase (331 aa).

The protein belongs to the allantoicase family.

The catalysed reaction is allantoate + H2O = (S)-ureidoglycolate + urea. It functions in the pathway nitrogen metabolism; (S)-allantoin degradation; (S)-ureidoglycolate from allantoate (aminidohydrolase route): step 1/1. This chain is Probable allantoicase, found in Pseudomonas fluorescens (strain ATCC BAA-477 / NRRL B-23932 / Pf-5).